The primary structure comprises 612 residues: Dihydroxy-acid dehydratase (612 aa).

Asp-81 is a binding site for Mg(2+). Cys-122 serves as a coordination point for [2Fe-2S] cluster. Positions 123 and 124 each coordinate Mg(2+). N6-carboxylysine is present on Lys-124. Residue Cys-193 participates in [2Fe-2S] cluster binding. Residue Glu-489 coordinates Mg(2+). Ser-515 (proton acceptor) is an active-site residue.

Belongs to the IlvD/Edd family. As to quaternary structure, homodimer. It depends on [2Fe-2S] cluster as a cofactor. The cofactor is Mg(2+).

The catalysed reaction is (2R)-2,3-dihydroxy-3-methylbutanoate = 3-methyl-2-oxobutanoate + H2O. The enzyme catalyses (2R,3R)-2,3-dihydroxy-3-methylpentanoate = (S)-3-methyl-2-oxopentanoate + H2O. The protein operates within amino-acid biosynthesis; L-isoleucine biosynthesis; L-isoleucine from 2-oxobutanoate: step 3/4. It functions in the pathway amino-acid biosynthesis; L-valine biosynthesis; L-valine from pyruvate: step 3/4. Its function is as follows. Functions in the biosynthesis of branched-chain amino acids. Catalyzes the dehydration of (2R,3R)-2,3-dihydroxy-3-methylpentanoate (2,3-dihydroxy-3-methylvalerate) into 2-oxo-3-methylpentanoate (2-oxo-3-methylvalerate) and of (2R)-2,3-dihydroxy-3-methylbutanoate (2,3-dihydroxyisovalerate) into 2-oxo-3-methylbutanoate (2-oxoisovalerate), the penultimate precursor to L-isoleucine and L-valine, respectively. The protein is Dihydroxy-acid dehydratase of Ectopseudomonas mendocina (strain ymp) (Pseudomonas mendocina).